We begin with the raw amino-acid sequence, 88 residues long: Small capsomere-interacting protein (88 aa).

The interval 1-30 (MTTIRSDDLSNQITQISGSSKKEEEKKKQQ) is disordered. The span at 9–19 (LSNQITQISGS) shows a compositional bias: polar residues.

This sequence belongs to the herpesviridae small capsomere-interacting protein family. In terms of assembly, interacts with the major capsid protein/MCP.

It is found in the virion. Its subcellular location is the host nucleus. Its function is as follows. Participates in the assembly of the infectious particles by decorating the outer surface of the capsid shell and thus forming a layer between the capsid and the tegument. Complexes composed of the major capsid protein and small capsomere-interacting protein/SCP assemble together in the host cytoplasm and are translocated to the nucleus, where they accumulate and participate in capsid assembly. This is Small capsomere-interacting protein from Human herpesvirus 6A (strain Uganda-1102) (HHV-6 variant A).